Consider the following 132-residue polypeptide: Small ribosomal subunit protein uS8 (132 aa).

The protein belongs to the universal ribosomal protein uS8 family. In terms of assembly, part of the 30S ribosomal subunit. Contacts proteins S5 and S12.

In terms of biological role, one of the primary rRNA binding proteins, it binds directly to 16S rRNA central domain where it helps coordinate assembly of the platform of the 30S subunit. The protein is Small ribosomal subunit protein uS8 of Staphylococcus saprophyticus subsp. saprophyticus (strain ATCC 15305 / DSM 20229 / NCIMB 8711 / NCTC 7292 / S-41).